Consider the following 236-residue polypeptide: Small ribosomal subunit protein uS2c (236 aa).

Belongs to the universal ribosomal protein uS2 family.

It is found in the plastid. It localises to the chloroplast. The polypeptide is Small ribosomal subunit protein uS2c (rps2) (Acorus calamus var. americanus (American sweet flag)).